The chain runs to 488 residues: Cis-aconitate decarboxylase (488 aa).

It belongs to the PrpD family. As to quaternary structure, homodimer. Expressed in LPS-tolerized macrophages (at protein level). Expressed in the luminal epithelial cells of pregnant uterus. Expressed in microglia and macrophage cells.

The protein localises to the mitochondrion. The catalysed reaction is cis-aconitate + H(+) = itaconate + CO2. Its function is as follows. Cis-aconitate decarboxylase that catalyzes production of itaconate and is involved in the inhibition of the inflammatory response. Acts as a negative regulator of the Toll-like receptors (TLRs)-mediated inflammatory innate response by stimulating the tumor necrosis factor alpha-induced protein TNFAIP3 expression via reactive oxygen species (ROS) in LPS-tolerized macrophages. Involved in antimicrobial response of innate immune cells; ACOD1-mediated itaconic acid production contributes to the antimicrobial activity of macrophages by generating itaconate, leading to alkylation of proteins, such as TFEB. Involved in antiviral response following infection by flavivirus in neurons: ACOD1-mediated itaconate production inhibits the activity of succinate dehydrogenase, generating a metabolic state in neurons that suppresses replication of viral genomes. Plays a role in the embryo implantation. The sequence is that of Cis-aconitate decarboxylase from Mus musculus (Mouse).